The primary structure comprises 552 residues: Cytochrome c oxidase subunit 1 (552 aa).

The helical transmembrane segment at 35-55 (VIGIQYLVTAFIFYLIGGLMA) threads the bilayer. Fe(II)-heme a is bound at residue His82. 6 helical membrane passes run 85–105 (IMIF…YLVP), 120–140 (ALAF…FLFG), 164–184 (WILA…NFIV), 211–231 (LLAL…LFDI), 252–272 (LFWF…FGIM), and 284–304 (IFGY…GLFV). Residues His258 and Tyr262 each coordinate Cu cation. Positions 258-262 (HPAVY) form a cross-link, 1'-histidyl-3'-tyrosine (His-Tyr). Residues His307 and His308 each coordinate Cu cation. A run of 5 helical transmembrane segments spans residues 321–341 (FFTI…FSWV), 355–375 (MLFA…GVTL), 390–410 (VVAH…YAGI), 426–446 (LGIL…LPMH), and 470–490 (ICTI…INII). His393 is a binding site for heme a3. His395 contacts Fe(II)-heme a.

This sequence belongs to the heme-copper respiratory oxidase family. Cu(2+) is required as a cofactor. Requires heme as cofactor.

It is found in the cell membrane. The enzyme catalyses 4 Fe(II)-[cytochrome c] + O2 + 8 H(+)(in) = 4 Fe(III)-[cytochrome c] + 2 H2O + 4 H(+)(out). It participates in energy metabolism; oxidative phosphorylation. Functionally, cytochrome c oxidase is the component of the respiratory chain that catalyzes the reduction of oxygen to water. Subunits 1-3 form the functional core of the enzyme complex. CO I is the catalytic subunit of the enzyme. Electrons originating in cytochrome c are transferred via the copper A center of subunit 2 and heme A of subunit 1 to the bimetallic center formed by heme A3 and copper B. The protein is Cytochrome c oxidase subunit 1 (ctaD) of Thermostichus vulcanus (Synechococcus vulcanus).